An 86-amino-acid polypeptide reads, in one-letter code: Kappa-theraphotoxin-Cg1c (86 aa).

Residues 1–21 (MKVSVLITLAVLGVMFVWASA) form the signal peptide. The propeptide occupies 22 to 50 (AELEERGSDHRDSPAWLKSMERIFQSEER). Cystine bridges form between Cys-52–Cys-66, Cys-59–Cys-71, and Cys-65–Cys-78.

Belongs to the neurotoxin 10 (Hwtx-1) family. 28 (Jztx-11) subfamily. In terms of tissue distribution, expressed by the venom gland.

Its subcellular location is the secreted. Its function is as follows. Probable ion channel inhibitor. The protein is Kappa-theraphotoxin-Cg1c of Chilobrachys guangxiensis (Chinese earth tiger tarantula).